A 194-amino-acid polypeptide reads, in one-letter code: dCTP deaminase (194 aa).

DCTP is bound by residues 110 to 115, Asp-128, 136 to 138, Tyr-171, Lys-178, and Gln-182; these read RSSLAR and VLE. Residue Glu-138 is the Proton donor/acceptor of the active site. A disordered region spans residues 172–194; the sequence is NKRKSAKYRDQQEAVASRISQDK.

It belongs to the dCTP deaminase family. In terms of assembly, homotrimer.

It carries out the reaction dCTP + H2O + H(+) = dUTP + NH4(+). It participates in pyrimidine metabolism; dUMP biosynthesis; dUMP from dCTP (dUTP route): step 1/2. Functionally, catalyzes the deamination of dCTP to dUTP. This chain is dCTP deaminase, found in Shewanella loihica (strain ATCC BAA-1088 / PV-4).